A 762-amino-acid chain; its full sequence is MTTIKTSNLGFPRIGLNREWKKTLEAYWKGNTDKETFLKELDGLFLSAVKTQLDQHIDIVPVSDFTHYDHVLDTAVSFNWIPKRFRSITDPVDTYFAIARGVKDAVSSEMTKWFNTNYHYIVPEYDESIEFRLTRNKQLDDYRRIKEEFGAETKPVIVGPYTFVTLAKGYEESEAKAIQKRLVPLYVQLLKELEAEGVKWVQIDEPALVTASSEDVRAAKELYESITKELSGLNVLLQTYFDSVDAYEELVSYPVQGIGLDFVHDKGRNLDQLKKHGFPKDKVLAAGVIDGRNIWKIDVEERLDAALDILSHADVEELWIQPSSSLLHVPVAKHPDEHLEKDLLNGLSYAKEKLAELGVLKEGLLSGKAAVSEQIEESKAALKALKAFATGANSAQKEELNQLTEKDFSRPASFEERLALQNESLGLPLLPTTTIGSFPQSAEVRSARQKWRKKDWTDEQYQAFINAETKRWVDIQEEIGLDVLVHGEFERTDMVEYFGEKLAGFAFTKYAWVQSYGSRCVRPPVIFGDVEFIEPMTVKDTVYAQSLTEKHMKGMLTGPVTILNWSFPRVDISRKEIAFQIGLALRKEVKALEDAGIQIIQVDEPALREGLPLKTQDWDEYLTWAAEAFRLTTSSVQNETQIHTHMCYSNFEDIVDTINDLDADVITIEHSRSHGGFLEYLKEHPYVKGLGLGVYDIHSPRVPATEEIYQIIDDALEVCPTDRFWVNPDCGLKTRQQEETVAALKNMVDAAKQARKKQAQLV.

5-methyltetrahydropteroyltri-L-glutamate is bound by residues 18 to 21 and Lys112; that span reads REWK. L-homocysteine is bound by residues 435 to 437 and Glu488; that span reads IGS. L-methionine contacts are provided by residues 435–437 and Glu488; that span reads IGS. Residues 519–520 and Trp565 each bind 5-methyltetrahydropteroyltri-L-glutamate; that span reads RC. Residue Asp603 coordinates L-homocysteine. Residue Asp603 coordinates L-methionine. Glu609 contacts 5-methyltetrahydropteroyltri-L-glutamate. Zn(2+)-binding residues include His645, Cys647, and Glu669. Residue His698 is the Proton donor of the active site. Cys730 is a binding site for Zn(2+).

The protein belongs to the vitamin-B12 independent methionine synthase family. Zn(2+) serves as cofactor.

It catalyses the reaction 5-methyltetrahydropteroyltri-L-glutamate + L-homocysteine = tetrahydropteroyltri-L-glutamate + L-methionine. Its pathway is amino-acid biosynthesis; L-methionine biosynthesis via de novo pathway; L-methionine from L-homocysteine (MetE route): step 1/1. Catalyzes the transfer of a methyl group from 5-methyltetrahydrofolate to homocysteine resulting in methionine formation. This chain is 5-methyltetrahydropteroyltriglutamate--homocysteine methyltransferase, found in Bacillus velezensis (strain DSM 23117 / BGSC 10A6 / LMG 26770 / FZB42) (Bacillus amyloliquefaciens subsp. plantarum).